The primary structure comprises 360 residues: Mannose-1-phosphate guanyltransferase beta-A (360 aa).

The protein belongs to the transferase hexapeptide repeat family.

The catalysed reaction is alpha-D-mannose 1-phosphate + GTP + H(+) = GDP-alpha-D-mannose + diphosphate. Its pathway is nucleotide-sugar biosynthesis; GDP-alpha-D-mannose biosynthesis; GDP-alpha-D-mannose from alpha-D-mannose 1-phosphate (GTP route): step 1/1. This Xenopus laevis (African clawed frog) protein is Mannose-1-phosphate guanyltransferase beta-A (gmppb-a).